The primary structure comprises 372 residues: Chaperone protein DnaJ (372 aa).

The J domain occupies 5 to 69 (DYYEVLGVSK…DKRKQYDQFG (65 aa)). Residues 139–221 (GVDKIIELDL…CKGKGKYLER (83 aa)) form a CR-type zinc finger. Residues C152, C155, C169, C172, C195, C198, C209, and C212 each coordinate Zn(2+). 4 CXXCXGXG motif repeats span residues 152–159 (CSACFGSG), 169–176 (CNNCHGTG), 195–202 (CNVCNGAG), and 209–216 (CKNCKGKG).

Belongs to the DnaJ family. As to quaternary structure, homodimer. Zn(2+) serves as cofactor.

It is found in the cytoplasm. Functionally, participates actively in the response to hyperosmotic and heat shock by preventing the aggregation of stress-denatured proteins and by disaggregating proteins, also in an autonomous, DnaK-independent fashion. Unfolded proteins bind initially to DnaJ; upon interaction with the DnaJ-bound protein, DnaK hydrolyzes its bound ATP, resulting in the formation of a stable complex. GrpE releases ADP from DnaK; ATP binding to DnaK triggers the release of the substrate protein, thus completing the reaction cycle. Several rounds of ATP-dependent interactions between DnaJ, DnaK and GrpE are required for fully efficient folding. Also involved, together with DnaK and GrpE, in the DNA replication of plasmids through activation of initiation proteins. This chain is Chaperone protein DnaJ, found in Mycoplasma capricolum subsp. capricolum (strain California kid / ATCC 27343 / NCTC 10154).